A 318-amino-acid polypeptide reads, in one-letter code: Aspartate carbamoyltransferase catalytic subunit (318 aa).

The carbamoyl phosphate site is built by R59 and T60. K87 serves as a coordination point for L-aspartate. Carbamoyl phosphate-binding residues include R109, H137, and Q140. L-aspartate is bound by residues R170 and R224. Carbamoyl phosphate-binding residues include G265 and P266.

Belongs to the aspartate/ornithine carbamoyltransferase superfamily. ATCase family. As to quaternary structure, heterododecamer (2C3:3R2) of six catalytic PyrB chains organized as two trimers (C3), and six regulatory PyrI chains organized as three dimers (R2).

The enzyme catalyses carbamoyl phosphate + L-aspartate = N-carbamoyl-L-aspartate + phosphate + H(+). It functions in the pathway pyrimidine metabolism; UMP biosynthesis via de novo pathway; (S)-dihydroorotate from bicarbonate: step 2/3. In terms of biological role, catalyzes the condensation of carbamoyl phosphate and aspartate to form carbamoyl aspartate and inorganic phosphate, the committed step in the de novo pyrimidine nucleotide biosynthesis pathway. This Allorhizobium ampelinum (strain ATCC BAA-846 / DSM 112012 / S4) (Agrobacterium vitis (strain S4)) protein is Aspartate carbamoyltransferase catalytic subunit.